The sequence spans 252 residues: 3-deoxy-manno-octulosonate cytidylyltransferase (252 aa).

The protein belongs to the KdsB family.

Its subcellular location is the cytoplasm. The catalysed reaction is 3-deoxy-alpha-D-manno-oct-2-ulosonate + CTP = CMP-3-deoxy-beta-D-manno-octulosonate + diphosphate. Its pathway is nucleotide-sugar biosynthesis; CMP-3-deoxy-D-manno-octulosonate biosynthesis; CMP-3-deoxy-D-manno-octulosonate from 3-deoxy-D-manno-octulosonate and CTP: step 1/1. It participates in bacterial outer membrane biogenesis; lipopolysaccharide biosynthesis. Activates KDO (a required 8-carbon sugar) for incorporation into bacterial lipopolysaccharide in Gram-negative bacteria. This chain is 3-deoxy-manno-octulosonate cytidylyltransferase, found in Solibacter usitatus (strain Ellin6076).